We begin with the raw amino-acid sequence, 163 residues long: ATP synthase subunit b (163 aa).

The chain crosses the membrane as a helical span at residues 9–29 (GLLIAQLINVVFVVWLLTTFL).

This sequence belongs to the ATPase B chain family. In terms of assembly, F-type ATPases have 2 components, F(1) - the catalytic core - and F(0) - the membrane proton channel. F(1) has five subunits: alpha(3), beta(3), gamma(1), delta(1), epsilon(1). F(0) has four main subunits: a(1), b(2) and c(10-14). The alpha and beta chains form an alternating ring which encloses part of the gamma chain. F(1) is attached to F(0) by a central stalk formed by the gamma and epsilon chains, while a peripheral stalk is formed by the delta and b chains.

The protein localises to the cell membrane. F(1)F(0) ATP synthase produces ATP from ADP in the presence of a proton or sodium gradient. F-type ATPases consist of two structural domains, F(1) containing the extramembraneous catalytic core and F(0) containing the membrane proton channel, linked together by a central stalk and a peripheral stalk. During catalysis, ATP synthesis in the catalytic domain of F(1) is coupled via a rotary mechanism of the central stalk subunits to proton translocation. In terms of biological role, component of the F(0) channel, it forms part of the peripheral stalk, linking F(1) to F(0). This Roseiflexus castenholzii (strain DSM 13941 / HLO8) protein is ATP synthase subunit b.